The chain runs to 142 residues: Large ribosomal subunit protein uL11 (142 aa).

Belongs to the universal ribosomal protein uL11 family. As to quaternary structure, part of the ribosomal stalk of the 50S ribosomal subunit. Interacts with L10 and the large rRNA to form the base of the stalk. L10 forms an elongated spine to which L12 dimers bind in a sequential fashion forming a multimeric L10(L12)X complex. In terms of processing, one or more lysine residues are methylated.

Functionally, forms part of the ribosomal stalk which helps the ribosome interact with GTP-bound translation factors. This Yersinia pseudotuberculosis serotype O:1b (strain IP 31758) protein is Large ribosomal subunit protein uL11.